Reading from the N-terminus, the 115-residue chain is Ribosome-binding factor A (115 aa).

Belongs to the RbfA family. In terms of assembly, monomer. Binds 30S ribosomal subunits, but not 50S ribosomal subunits or 70S ribosomes.

It is found in the cytoplasm. One of several proteins that assist in the late maturation steps of the functional core of the 30S ribosomal subunit. Associates with free 30S ribosomal subunits (but not with 30S subunits that are part of 70S ribosomes or polysomes). Required for efficient processing of 16S rRNA. May interact with the 5'-terminal helix region of 16S rRNA. This Bacillus velezensis (strain DSM 23117 / BGSC 10A6 / LMG 26770 / FZB42) (Bacillus amyloliquefaciens subsp. plantarum) protein is Ribosome-binding factor A.